The following is a 956-amino-acid chain: Protein translocase subunit SecA (956 aa).

ATP-binding positions include Gln87, Gly105–Thr109, and Asp524. Zn(2+) is bound by residues Cys940, Cys942, Cys951, and His952.

It belongs to the SecA family. Monomer and homodimer. Part of the essential Sec protein translocation apparatus which comprises SecA, SecYEG and auxiliary proteins SecDF-YajC and YidC. Zn(2+) serves as cofactor.

It is found in the cell inner membrane. The protein resides in the cytoplasm. The catalysed reaction is ATP + H2O + cellular proteinSide 1 = ADP + phosphate + cellular proteinSide 2.. Its function is as follows. Part of the Sec protein translocase complex. Interacts with the SecYEG preprotein conducting channel. Has a central role in coupling the hydrolysis of ATP to the transfer of proteins into and across the cell membrane, serving both as a receptor for the preprotein-SecB complex and as an ATP-driven molecular motor driving the stepwise translocation of polypeptide chains across the membrane. The sequence is that of Protein translocase subunit SecA from Beijerinckia indica subsp. indica (strain ATCC 9039 / DSM 1715 / NCIMB 8712).